The following is a 513-amino-acid chain: Activin receptor type-2A (513 aa).

An N-terminal signal peptide occupies residues 1–19; the sequence is MGAAAKLAFAVFLISCSSG. At 20 to 135 the chain is on the extracellular side; it reads AILGRSETQE…TSNPVTPKPP (116 aa). 5 cysteine pairs are disulfide-bonded: cysteine 30–cysteine 60, cysteine 50–cysteine 78, cysteine 85–cysteine 104, cysteine 91–cysteine 103, and cysteine 105–cysteine 110. Asparagine 43 and asparagine 66 each carry an N-linked (GlcNAc...) asparagine glycan. Residues 136–161 traverse the membrane as a helical segment; that stretch reads YYNILLYSLVPLMLIAGIVICAFWVY. The Cytoplasmic portion of the chain corresponds to 162 to 513; that stretch reads RHHKMAYPPV…VDFPPKESSL (352 aa). The 294-residue stretch at 192 to 485 folds into the Protein kinase domain; that stretch reads LQLLEVKARG…GERITQMQRL (294 aa). ATP-binding positions include 198–206 and lysine 219; that span reads KARGRFGCV. Catalysis depends on aspartate 322, which acts as the Proton acceptor.

The protein belongs to the protein kinase superfamily. TKL Ser/Thr protein kinase family. TGFB receptor subfamily. As to quaternary structure, part of a complex consisting of MAGI2/ARIP1, ACVR2A, ACVR1B and SMAD3. Interacts with MAGI2/ARIP1. Interacts with type I receptor ACVR1. Interacts with BMP7. Interacts with TSC22D1/TSC-22. Interacts with activin A/INHBA. The cofactor is Mg(2+). Requires Mn(2+) as cofactor. In terms of tissue distribution, brain, testis, intestine, liver and kidney.

The protein localises to the cell membrane. It carries out the reaction L-threonyl-[receptor-protein] + ATP = O-phospho-L-threonyl-[receptor-protein] + ADP + H(+). The enzyme catalyses L-seryl-[receptor-protein] + ATP = O-phospho-L-seryl-[receptor-protein] + ADP + H(+). On ligand binding, forms a receptor complex consisting of two type II and two type I transmembrane serine/threonine kinases. Type II receptors phosphorylate and activate type I receptors which autophosphorylate, then bind and activate SMAD transcriptional regulators. Receptor for activin A, activin B and inhibin A. Mediates induction of adipogenesis by GDF6. The protein is Activin receptor type-2A of Mus musculus (Mouse).